Reading from the N-terminus, the 341-residue chain is Heme A synthase (341 aa).

8 helical membrane-spanning segments follow: residues 8 to 28, 92 to 112, 126 to 146, 160 to 180, 201 to 221, 256 to 276, 294 to 314, and 315 to 335; these read VIIWLLSGCVLLFLMVVVGGI, FHRFIGRIIGLVFFVPFVYFL, IVLLAMGAFQGFLGWFMVRSG, LHLTFAFITFAYTLWVALDLI, AALLIQIIYGGFVAGLNAGLI, VQFVHRTFAYAVVAVILFLFF, LVVFVFIQFLLGVFTLLYSVP, and LALGLIHQIMAFFLLSAMTYT. H260 contributes to the heme binding site. H321 contributes to the heme binding site.

This sequence belongs to the COX15/CtaA family. Type 2 subfamily. In terms of assembly, interacts with CtaB. Heme b serves as cofactor.

The protein localises to the cell membrane. It carries out the reaction Fe(II)-heme o + 2 A + H2O = Fe(II)-heme a + 2 AH2. The protein operates within porphyrin-containing compound metabolism; heme A biosynthesis; heme A from heme O: step 1/1. In terms of biological role, catalyzes the conversion of heme O to heme A by two successive hydroxylations of the methyl group at C8. The first hydroxylation forms heme I, the second hydroxylation results in an unstable dihydroxymethyl group, which spontaneously dehydrates, resulting in the formyl group of heme A. In Flavobacterium johnsoniae (strain ATCC 17061 / DSM 2064 / JCM 8514 / BCRC 14874 / CCUG 350202 / NBRC 14942 / NCIMB 11054 / UW101) (Cytophaga johnsonae), this protein is Heme A synthase.